The chain runs to 171 residues: Large ribosomal subunit protein uL10 (171 aa).

This sequence belongs to the universal ribosomal protein uL10 family. In terms of assembly, part of the ribosomal stalk of the 50S ribosomal subunit. The N-terminus interacts with L11 and the large rRNA to form the base of the stalk. The C-terminus forms an elongated spine to which L12 dimers bind in a sequential fashion forming a multimeric L10(L12)X complex.

Its function is as follows. Forms part of the ribosomal stalk, playing a central role in the interaction of the ribosome with GTP-bound translation factors. In Phenylobacterium zucineum (strain HLK1), this protein is Large ribosomal subunit protein uL10.